The sequence spans 241 residues: Biosynthetic peptidoglycan transglycosylase (241 aa).

Residues 18–38 traverse the membrane as a helical segment; sequence GVIGIIALWMAGILIFAFLPV.

Belongs to the glycosyltransferase 51 family.

It localises to the cell inner membrane. The catalysed reaction is [GlcNAc-(1-&gt;4)-Mur2Ac(oyl-L-Ala-gamma-D-Glu-L-Lys-D-Ala-D-Ala)](n)-di-trans,octa-cis-undecaprenyl diphosphate + beta-D-GlcNAc-(1-&gt;4)-Mur2Ac(oyl-L-Ala-gamma-D-Glu-L-Lys-D-Ala-D-Ala)-di-trans,octa-cis-undecaprenyl diphosphate = [GlcNAc-(1-&gt;4)-Mur2Ac(oyl-L-Ala-gamma-D-Glu-L-Lys-D-Ala-D-Ala)](n+1)-di-trans,octa-cis-undecaprenyl diphosphate + di-trans,octa-cis-undecaprenyl diphosphate + H(+). It functions in the pathway cell wall biogenesis; peptidoglycan biosynthesis. Functionally, peptidoglycan polymerase that catalyzes glycan chain elongation from lipid-linked precursors. This Yersinia pestis bv. Antiqua (strain Antiqua) protein is Biosynthetic peptidoglycan transglycosylase.